The following is a 217-amino-acid chain: Probable transaldolase (217 aa).

Lysine 83 functions as the Schiff-base intermediate with substrate in the catalytic mechanism.

Belongs to the transaldolase family. Type 3B subfamily.

The protein localises to the cytoplasm. The catalysed reaction is D-sedoheptulose 7-phosphate + D-glyceraldehyde 3-phosphate = D-erythrose 4-phosphate + beta-D-fructose 6-phosphate. It participates in carbohydrate degradation; pentose phosphate pathway; D-glyceraldehyde 3-phosphate and beta-D-fructose 6-phosphate from D-ribose 5-phosphate and D-xylulose 5-phosphate (non-oxidative stage): step 2/3. In terms of biological role, transaldolase is important for the balance of metabolites in the pentose-phosphate pathway. The sequence is that of Probable transaldolase from Erythrobacter litoralis (strain HTCC2594).